The primary structure comprises 276 residues: MLERVAVLYNPLSDASIKLSRELTDWLIARGIKTRRGVSQEFRDQPQLVADCDLMIALGGDGTVLRAARLCFPHNIPVLPVALGHLSFMAEIGPEEVYSGCEQIMNGGGWFDERTLVRAQLWRNGQKLGQHTALNEVVISRSDISRIVNVHVTIDDSPLTTYHADGVIVATATGSTAYALAAGGPIVDPRSQALVLVPIAAHLTNIPSMVLHEDAVVTMQLRSRHHALLAVDGRENIDLIEGDEVVVRRSPQVCTFVRLRPSNQFYTQLVARLRRS.

Asp-61 serves as the catalytic Proton acceptor. NAD(+) is bound by residues 61–62 (DG), Arg-66, 135–136 (NE), Arg-146, His-163, Asp-165, and Ala-200.

This sequence belongs to the NAD kinase family. A divalent metal cation is required as a cofactor.

Its subcellular location is the cytoplasm. The enzyme catalyses NAD(+) + ATP = ADP + NADP(+) + H(+). Involved in the regulation of the intracellular balance of NAD and NADP, and is a key enzyme in the biosynthesis of NADP. Catalyzes specifically the phosphorylation on 2'-hydroxyl of the adenosine moiety of NAD to yield NADP. In Chloroflexus aggregans (strain MD-66 / DSM 9485), this protein is NAD kinase.